The chain runs to 178 residues: E1B protein, small T-antigen (178 aa).

The protein belongs to the adenoviridae E1B 19 kDa protein family.

The protein localises to the host cell membrane. Its subcellular location is the host nucleus envelope. It localises to the host nucleus lamina. Putative adenovirus Bcl-2 homolog that inhibits apoptosis induced by TNF or FAS pathways, as well as p53-mediated apoptosis. Without E1B 19K function, virus production is compromised because of premature death of host cell. Interacts with Bax protein in cell lysates. The sequence is that of E1B protein, small T-antigen from Human adenovirus B serotype 7 (HAdV-7).